Consider the following 862-residue polypeptide: Valine--tRNA ligase (862 aa).

Residues 47–57 (PTASGSLHIGH) carry the 'HIGH' region motif. The interval 110-130 (EPGLTPPFEGGDNKSSKAADQ) is disordered. The segment covering 120–129 (GDNKSSKAAD) has biased composition (basic and acidic residues). The 'KMSKS' region signature appears at 584 to 588 (KMSKS). Lys-587 contributes to the ATP binding site.

Belongs to the class-I aminoacyl-tRNA synthetase family. ValS type 2 subfamily. In terms of assembly, monomer.

It localises to the cytoplasm. It carries out the reaction tRNA(Val) + L-valine + ATP = L-valyl-tRNA(Val) + AMP + diphosphate. Catalyzes the attachment of valine to tRNA(Val). As ValRS can inadvertently accommodate and process structurally similar amino acids such as threonine, to avoid such errors, it has a 'posttransfer' editing activity that hydrolyzes mischarged Thr-tRNA(Val) in a tRNA-dependent manner. In Leifsonia xyli subsp. xyli (strain CTCB07), this protein is Valine--tRNA ligase.